Reading from the N-terminus, the 261-residue chain is Cytochrome c oxidase subunit 3 (261 aa).

Residues Met-1–Pro-15 are Mitochondrial matrix-facing. The chain crosses the membrane as a helical span at residues Trp-16 to Trp-34. The Mitochondrial intermembrane portion of the chain corresponds to Phe-35–Thr-40. Residues Ile-41–Thr-66 traverse the membrane as a helical segment. Residues Phe-67 to Thr-72 are Mitochondrial matrix-facing. The chain crosses the membrane as a helical span at residues Pro-73–Ser-105. The Mitochondrial intermembrane portion of the chain corresponds to Leu-106–Glu-128. The helical transmembrane segment at Val-129–Met-152 threads the bilayer. Topologically, residues Glu-153 to Asp-155 are mitochondrial matrix. A helical transmembrane segment spans residues Arg-156 to Glu-183. Over Ala-184–Asp-190 the chain is Mitochondrial intermembrane. Residues Gly-191 to Leu-223 traverse the membrane as a helical segment. Topologically, residues Lys-224 to His-232 are mitochondrial matrix. The chain crosses the membrane as a helical span at residues Phe-233–Ile-256. Topologically, residues Tyr-257–Ser-261 are mitochondrial intermembrane.

The protein belongs to the cytochrome c oxidase subunit 3 family. Component of the cytochrome c oxidase (complex IV, CIV), a multisubunit enzyme composed of 14 subunits. The complex is composed of a catalytic core of 3 subunits MT-CO1, MT-CO2 and MT-CO3, encoded in the mitochondrial DNA, and 11 supernumerary subunits COX4I, COX5A, COX5B, COX6A, COX6B, COX6C, COX7A, COX7B, COX7C, COX8 and NDUFA4, which are encoded in the nuclear genome. The complex exists as a monomer or a dimer and forms supercomplexes (SCs) in the inner mitochondrial membrane with NADH-ubiquinone oxidoreductase (complex I, CI) and ubiquinol-cytochrome c oxidoreductase (cytochrome b-c1 complex, complex III, CIII), resulting in different assemblies (supercomplex SCI(1)III(2)IV(1) and megacomplex MCI(2)III(2)IV(2)).

The protein resides in the mitochondrion inner membrane. The catalysed reaction is 4 Fe(II)-[cytochrome c] + O2 + 8 H(+)(in) = 4 Fe(III)-[cytochrome c] + 2 H2O + 4 H(+)(out). Component of the cytochrome c oxidase, the last enzyme in the mitochondrial electron transport chain which drives oxidative phosphorylation. The respiratory chain contains 3 multisubunit complexes succinate dehydrogenase (complex II, CII), ubiquinol-cytochrome c oxidoreductase (cytochrome b-c1 complex, complex III, CIII) and cytochrome c oxidase (complex IV, CIV), that cooperate to transfer electrons derived from NADH and succinate to molecular oxygen, creating an electrochemical gradient over the inner membrane that drives transmembrane transport and the ATP synthase. Cytochrome c oxidase is the component of the respiratory chain that catalyzes the reduction of oxygen to water. Electrons originating from reduced cytochrome c in the intermembrane space (IMS) are transferred via the dinuclear copper A center (CU(A)) of subunit 2 and heme A of subunit 1 to the active site in subunit 1, a binuclear center (BNC) formed by heme A3 and copper B (CU(B)). The BNC reduces molecular oxygen to 2 water molecules using 4 electrons from cytochrome c in the IMS and 4 protons from the mitochondrial matrix. The chain is Cytochrome c oxidase subunit 3 (MT-CO3) from Tragelaphus imberbis (Lesser kudu).